The chain runs to 293 residues: MKRIFQTIALIGKPRNPDALQTHKTLFDWLTGKGYDVLVDHRLANDLDVPQDCLCDLLTIGDKANLAIVVGGDGNMLGAARVLSRFDIAVIGVNRGNLGFLTDLDPESFKEELTRVLEGEFVTERRFLLEAEVHRHGQIKSRNAALNEAVLHPDKIAHMIEFEVYIDDNFAFSQRSDGLIIATPTGSTAYSLSGGGPILSPSLNAITLVPMFPHTLSSRPLVVDGDRCIKLLVSPNNGSTLEVSCDGQVSLPVSPGDEVHIYQSPEQLQLIHPKNYNYYGVLRAKLGWSSKLF.

The active-site Proton acceptor is Asp73. NAD(+) is bound by residues 73–74 (DG), 147–148 (NE), His158, Arg175, Asp177, 188–193 (TAYSLS), and Gln248.

This sequence belongs to the NAD kinase family. A divalent metal cation is required as a cofactor.

The protein resides in the cytoplasm. It carries out the reaction NAD(+) + ATP = ADP + NADP(+) + H(+). Functionally, involved in the regulation of the intracellular balance of NAD and NADP, and is a key enzyme in the biosynthesis of NADP. Catalyzes specifically the phosphorylation on 2'-hydroxyl of the adenosine moiety of NAD to yield NADP. The sequence is that of NAD kinase from Photobacterium profundum (strain SS9).